Here is a 440-residue protein sequence, read N- to C-terminus: Glycerophosphocholine cholinephosphodiesterase ENPP6 (440 aa).

Residues 1-22 form the signal peptide; it reads MAVKLGTLLLALALGLAQPASA. 3 residues coordinate substrate: Asp-32, Ser-71, and Asn-92. Residues Asp-32 and Ser-71 each coordinate Zn(2+). Ser-71 serves as the catalytic Nucleophile. A Phosphoserine modification is found at Ser-71. N-linked (GlcNAc...) asparagine glycosylation is found at Asn-100 and Asn-118. Cys-142 and Cys-154 are joined by a disulfide. Asp-193 is a substrate binding site. Residues Asp-193, His-197, Asp-240, and His-241 each contribute to the Zn(2+) site. His-241 contributes to the substrate binding site. Asn-341 carries an N-linked (GlcNAc...) asparagine glycan. His-354 contributes to the substrate binding site. Position 354 (His-354) interacts with Zn(2+). N-linked (GlcNAc...) asparagine glycosylation is present at Asn-404. A lipid anchor (GPI-anchor amidated serine) is attached at Ser-419. A propeptide spans 420–440 (removed in mature form); sequence TAPPVWPSHCALALILLFLLA.

This sequence belongs to the nucleotide pyrophosphatase/phosphodiesterase family. As to quaternary structure, homodimer; disulfide-linked. Homotetramer. Zn(2+) serves as cofactor. Predominantly expressed in kidney and brain. In the kidney, expressed specifically in the proximal tubules and thin descending limbs of Henle (at protein level).

The protein localises to the cell membrane. It catalyses the reaction sn-glycerol 3-phosphocholine + H2O = phosphocholine + glycerol + H(+). The enzyme catalyses a 1-acyl-sn-glycero-3-phosphocholine + H2O = a 1-acyl-sn-glycerol + phosphocholine + H(+). The catalysed reaction is a 1-O-alkyl-sn-glycero-3-phosphocholine + H2O = a 1-O-alkyl-sn-glycerol + phosphocholine + H(+). It carries out the reaction 1-dodecanoyl-sn-glycero-3-phosphocholine + H2O = 1-dodecanoyl-sn-glycerol + phosphocholine + H(+). It catalyses the reaction 1-hexadecanoyl-sn-glycero-3-phosphocholine + H2O = 1-hexadecanoyl-sn-glycerol + phosphocholine + H(+). The enzyme catalyses 1-(5Z,8Z,11Z,14Z-eicosatetraenoyl)-sn-glycero-3-phosphocholine + H2O = 1-(5Z,8Z,11Z,14Z-eicosatetraenoyl)-sn-glycerol + phosphocholine + H(+). The catalysed reaction is 1-tetradecanoyl-sn-glycero-3-phosphocholine + H2O = 1-tetradecanoyl-sn-glycerol + phosphocholine + H(+). It carries out the reaction sphing-4-enine-phosphocholine + H2O = sphing-4-enine + phosphocholine + H(+). It catalyses the reaction 1-(9Z-octadecenoyl)-sn-glycero-3-phosphocholine + H2O = 1-(9Z-octadecenoyl)-sn-glycerol + phosphocholine + H(+). The enzyme catalyses 1-(9Z,12Z)-octadecadienoyl-sn-glycero-3-phosphocholine + H2O = 1-(9Z,12Z-octadecadienoyl)-sn-glycerol + phosphocholine + H(+). The catalysed reaction is glycero-2-phosphocholine + H2O = phosphocholine + glycerol + H(+). Inhibited by EDTA and EGTA in vitro. Its function is as follows. Choline-specific glycerophosphodiesterase that hydrolyzes glycerophosphocholine (GPC) and lysophosphatidylcholine (LPC) and contributes to supplying choline to the cells. Has a preference for LPC with short (12:0 and 14:0) or polyunsaturated (18:2 and 20:4) fatty acids. In vitro, hydrolyzes only choline-containing lysophospholipids, such as sphingosylphosphorylcholine (SPC), platelet-activating factor (PAF) and lysoPAF, but not other lysophospholipids. In Homo sapiens (Human), this protein is Glycerophosphocholine cholinephosphodiesterase ENPP6.